Reading from the N-terminus, the 788-residue chain is Endonuclease MutS2 (788 aa).

332 to 339 (GPNTGGKT) contacts ATP. The region spanning 713-788 (VDLRGMDAEE…GTGVTVVELK (76 aa)) is the Smr domain.

Belongs to the DNA mismatch repair MutS family. MutS2 subfamily. Homodimer. Binds to stalled ribosomes, contacting rRNA.

Endonuclease that is involved in the suppression of homologous recombination and thus may have a key role in the control of bacterial genetic diversity. In terms of biological role, acts as a ribosome collision sensor, splitting the ribosome into its 2 subunits. Detects stalled/collided 70S ribosomes which it binds and splits by an ATP-hydrolysis driven conformational change. Acts upstream of the ribosome quality control system (RQC), a ribosome-associated complex that mediates the extraction of incompletely synthesized nascent chains from stalled ribosomes and their subsequent degradation. Probably generates substrates for RQC. The protein is Endonuclease MutS2 of Clostridium botulinum (strain ATCC 19397 / Type A).